Reading from the N-terminus, the 278-residue chain is HTH-type transcriptional activator RhaS (278 aa).

The HTH araC/xylS-type domain maps to 174–272; sequence NQLMAWLEDH…NWSPRDIRQG (99 aa). DNA-binding regions (H-T-H motif) lie at residues 191-212 and 239-262; these read EAVA…KQHT and VTEI…RREF.

In terms of assembly, binds DNA as a dimer.

It is found in the cytoplasm. Functionally, activates expression of the rhaBAD and rhaT operons. The sequence is that of HTH-type transcriptional activator RhaS from Salmonella arizonae (strain ATCC BAA-731 / CDC346-86 / RSK2980).